We begin with the raw amino-acid sequence, 499 residues long: NAD(P)H-quinone oxidoreductase chain 4, chloroplastic (499 aa).

Transmembrane regions (helical) follow at residues 4-24 (LPWL…IPLF), 31-51 (MIRW…TYIF), 87-107 (IGLI…AWPV), 113-130 (LLHF…GLFA), 134-154 (ILLF…LLSM), 167-187 (FLLY…SMGL), 211-231 (ILLY…FPLH), 242-262 (HYST…YGLI), 274-294 (SLFS…AALT), 305-325 (IAYS…SMTY), 330-350 (GAIL…FLVG), 386-406 (LALP…GVIT), 416-436 (IIIT…LLSM), and 462-482 (LFIL…PDLV).

It belongs to the complex I subunit 4 family.

The protein localises to the plastid. It is found in the chloroplast thylakoid membrane. The enzyme catalyses a plastoquinone + NADH + (n+1) H(+)(in) = a plastoquinol + NAD(+) + n H(+)(out). It catalyses the reaction a plastoquinone + NADPH + (n+1) H(+)(in) = a plastoquinol + NADP(+) + n H(+)(out). This chain is NAD(P)H-quinone oxidoreductase chain 4, chloroplastic, found in Cryptomeria japonica (Japanese cedar).